The chain runs to 540 residues: Testis-specific chromodomain protein Y 1 (540 aa).

Residues 6-66 (FEVEAIVDKR…RQTEKQKKLT (61 aa)) enclose the Chromo domain. Residues 76 to 106 (NNARRRTSRSTKANYSKNSPKTPVTDKHHRS) are disordered. Polar residues predominate over residues 87-97 (KANYSKNSPKT).

In terms of assembly, interacts (via chromo domain) with histone H3K9me3. As to expression, testis-specific. Detected in spermatids (at protein level).

The protein localises to the nucleus. It carries out the reaction L-lysyl-[protein] + acetyl-CoA = N(6)-acetyl-L-lysyl-[protein] + CoA + H(+). In terms of biological role, has histone acetyltransferase activity, with a preference for histone H4. In Homo sapiens (Human), this protein is Testis-specific chromodomain protein Y 1 (CDY1).